Here is a 119-residue protein sequence, read N- to C-terminus: Autophagy-related protein 8c (119 aa).

A lipid anchor (Phosphatidylethanolamine amidated glycine) is attached at Gly117. Residues 118 to 119 (LV) constitute a propeptide, removed in mature form.

The protein belongs to the ATG8 family. In terms of assembly, interacts with ATG4. Interacts with NBR1. The C-terminal 2 residues are removed by ATG4 to expose Gly-117 at the C-terminus. This Gly-117 forms then a thioester bond with the 'Cys-558' of ATG7 (E1-like activating enzyme) before being transferred to the 'Cys-258' of ATG3 (the specific E2 conjugating enzyme), in order to be finally amidated with phosphatidylethanolamine. This lipid modification anchors ATG8 to autophagosomes. Constitutively expressed.

The protein localises to the cytoplasmic vesicle. It is found in the autophagosome membrane. It localises to the vacuole membrane. The protein resides in the cytoplasm. Its subcellular location is the cytoskeleton. Functionally, ubiquitin-like modifier involved in autophagosomes formation. May mediate the delivery of the autophagosomes to the vacuole via the microtubule cytoskeleton. This Arabidopsis thaliana (Mouse-ear cress) protein is Autophagy-related protein 8c (ATG8C).